A 270-amino-acid polypeptide reads, in one-letter code: Diaminopimelate epimerase (270 aa).

Residues asparagine 15, glutamine 49, and asparagine 66 each coordinate substrate. The active-site Proton donor is cysteine 75. Substrate contacts are provided by residues 76–77 (GN), asparagine 155, asparagine 187, and 204–205 (ER). Catalysis depends on cysteine 213, which acts as the Proton acceptor. 214-215 (GS) provides a ligand contact to substrate.

It belongs to the diaminopimelate epimerase family. In terms of assembly, homodimer.

It localises to the cytoplasm. The catalysed reaction is (2S,6S)-2,6-diaminopimelate = meso-2,6-diaminopimelate. It functions in the pathway amino-acid biosynthesis; L-lysine biosynthesis via DAP pathway; DL-2,6-diaminopimelate from LL-2,6-diaminopimelate: step 1/1. Its function is as follows. Catalyzes the stereoinversion of LL-2,6-diaminopimelate (L,L-DAP) to meso-diaminopimelate (meso-DAP), a precursor of L-lysine and an essential component of the bacterial peptidoglycan. This is Diaminopimelate epimerase from Rickettsia africae (strain ESF-5).